The primary structure comprises 80 residues: Translation initiation factor IF-1 (80 aa).

The region spanning 6–80 (RKQEHEKERG…LTRGRIVYRL (75 aa)) is the S1-like domain.

The protein belongs to the IF-1 family. Component of the 30S ribosomal translation pre-initiation complex which assembles on the 30S ribosome in the order IF-2 and IF-3, IF-1 and N-formylmethionyl-tRNA(fMet); mRNA recruitment can occur at any time during PIC assembly.

It is found in the cytoplasm. Functionally, one of the essential components for the initiation of protein synthesis. Stabilizes the binding of IF-2 and IF-3 on the 30S subunit to which N-formylmethionyl-tRNA(fMet) subsequently binds. Helps modulate mRNA selection, yielding the 30S pre-initiation complex (PIC). Upon addition of the 50S ribosomal subunit IF-1, IF-2 and IF-3 are released leaving the mature 70S translation initiation complex. The protein is Translation initiation factor IF-1 of Aquifex aeolicus (strain VF5).